The chain runs to 319 residues: 1-aminocyclopropane-1-carboxylate oxidase (319 aa).

Residues 153 to 253 form the Fe2OG dioxygenase domain; sequence PTFGTKVSNY…RMSIASFYNP (101 aa). Residues His-177, Asp-179, and His-234 each coordinate Fe cation.

Belongs to the iron/ascorbate-dependent oxidoreductase family. Fe cation serves as cofactor.

The catalysed reaction is 1-aminocyclopropane-1-carboxylate + L-ascorbate + O2 = ethene + L-dehydroascorbate + hydrogen cyanide + CO2 + 2 H2O. It participates in alkene biosynthesis; ethylene biosynthesis via S-adenosyl-L-methionine; ethylene from S-adenosyl-L-methionine: step 2/2. The sequence is that of 1-aminocyclopropane-1-carboxylate oxidase (ACO1) from Prunus mume (Japanese apricot).